A 95-amino-acid chain; its full sequence is Aspartyl/glutamyl-tRNA(Asn/Gln) amidotransferase subunit C (95 aa).

It belongs to the GatC family. In terms of assembly, heterotrimer of A, B and C subunits.

It carries out the reaction L-glutamyl-tRNA(Gln) + L-glutamine + ATP + H2O = L-glutaminyl-tRNA(Gln) + L-glutamate + ADP + phosphate + H(+). The enzyme catalyses L-aspartyl-tRNA(Asn) + L-glutamine + ATP + H2O = L-asparaginyl-tRNA(Asn) + L-glutamate + ADP + phosphate + 2 H(+). Allows the formation of correctly charged Asn-tRNA(Asn) or Gln-tRNA(Gln) through the transamidation of misacylated Asp-tRNA(Asn) or Glu-tRNA(Gln) in organisms which lack either or both of asparaginyl-tRNA or glutaminyl-tRNA synthetases. The reaction takes place in the presence of glutamine and ATP through an activated phospho-Asp-tRNA(Asn) or phospho-Glu-tRNA(Gln). This Alkalilimnicola ehrlichii (strain ATCC BAA-1101 / DSM 17681 / MLHE-1) protein is Aspartyl/glutamyl-tRNA(Asn/Gln) amidotransferase subunit C.